Reading from the N-terminus, the 230-residue chain is MSAVPDIPGGPAQRLAQACDALRLPADAGQQQKLLRYIEQMQRWNRTYNLTAIRDPGQMLVQHLFDSLSVVAPLERGLPAAGSGARVKLFDVGSGGGLPGVVLAIMRAHWDVTCVDAVEKKTAFVRQMAGALGLPNLQAAHTRIEQLEPAQCDVVISRAFASLQDFAKLAGRHVREGGTLVAMKGKVPDDEIQALQQHGHWTVERIEPLVVPALDAQRCLIWMRRSQGNI.

S-adenosyl-L-methionine-binding positions include G93, L98, 144 to 145 (IE), and R158.

This sequence belongs to the methyltransferase superfamily. RNA methyltransferase RsmG family.

The protein localises to the cytoplasm. It catalyses the reaction guanosine(527) in 16S rRNA + S-adenosyl-L-methionine = N(7)-methylguanosine(527) in 16S rRNA + S-adenosyl-L-homocysteine. Functionally, specifically methylates the N7 position of guanine in position 527 of 16S rRNA. This is Ribosomal RNA small subunit methyltransferase G from Bordetella parapertussis (strain 12822 / ATCC BAA-587 / NCTC 13253).